Here is a 544-residue protein sequence, read N- to C-terminus: ATP-dependent RNA helicase HAS1 (544 aa).

The segment covering 1-10 (MSSTKPPTTT) has biased composition (low complexity). Residues 1 to 59 (MSSTKPPTTTNKRKRTSNAHDEAPAKRVPEASSSKVTLDDSQPAPATSSDAVLGARSAP) form a disordered region. The segment covering 18–29 (NAHDEAPAKRVP) has biased composition (basic and acidic residues). The span at 31–50 (ASSSKVTLDDSQPAPATSSD) shows a compositional bias: polar residues. Residues 66–94 (VPFSTLNLSPPTTAAIERMGFETMTEVQA) carry the Q motif motif. The region spanning 97–273 (IPPLLAGKDV…RISLRPGPLY (177 aa)) is the Helicase ATP-binding domain. 110–117 (ARTGSGKT) serves as a coordination point for ATP. A DEAD box motif is present at residues 220–223 (DEAD). One can recognise a Helicase C-terminal domain in the interval 287 to 456 (MLEQGYVVCE…DVQKQLESLI (170 aa)). The Bipartite nuclear localization signal motif lies at 299–315 (QRFMLLFTFLKKNLKKK). The disordered stretch occupies residues 513–544 (GSVKAKKSRDEDESSDDDGQPKKAYYRNRGRK).

It belongs to the DEAD box helicase family. DDX18/HAS1 subfamily. As to quaternary structure, associates in the nucleolus with the 60S and pre-60S ribosomal subunits.

Its subcellular location is the nucleus. It is found in the nucleolus. It carries out the reaction ATP + H2O = ADP + phosphate + H(+). Functionally, ATP-dependent RNA helicase involved in 40S ribosomal subunit biogenesis. Required for the processing and cleavage of 35S pre-rRNA at sites A0, A1, and A2, leading to mature 18S rRNA. The polypeptide is ATP-dependent RNA helicase HAS1 (HAS1) (Cryptococcus neoformans var. neoformans serotype D (strain JEC21 / ATCC MYA-565) (Filobasidiella neoformans)).